The chain runs to 507 residues: Proline--tRNA ligase (507 aa).

Belongs to the class-II aminoacyl-tRNA synthetase family. ProS type 3 subfamily. Homodimer.

It localises to the cytoplasm. It catalyses the reaction tRNA(Pro) + L-proline + ATP = L-prolyl-tRNA(Pro) + AMP + diphosphate. Catalyzes the attachment of proline to tRNA(Pro) in a two-step reaction: proline is first activated by ATP to form Pro-AMP and then transferred to the acceptor end of tRNA(Pro). The protein is Proline--tRNA ligase of Protochlamydia amoebophila (strain UWE25).